The following is a 47-amino-acid chain: Protein 0.5 (47 aa).

The N-terminal stretch at 1-23 (MYMLTIGLLTALGLAVGASFGKA) is a signal peptide. Residues 24–43 (LGVAVGSYFTACIIIGIIKG) traverse the membrane as a helical segment.

The protein localises to the host membrane. In Escherichia phage T7 (Bacteriophage T7), this protein is Protein 0.5.